Consider the following 298-residue polypeptide: Bifunctional protein FolD (298 aa).

NADP(+) is bound by residues 166–168 (GRS), Ser-191, and Ile-232.

Belongs to the tetrahydrofolate dehydrogenase/cyclohydrolase family. As to quaternary structure, homodimer.

The enzyme catalyses (6R)-5,10-methylene-5,6,7,8-tetrahydrofolate + NADP(+) = (6R)-5,10-methenyltetrahydrofolate + NADPH. It catalyses the reaction (6R)-5,10-methenyltetrahydrofolate + H2O = (6R)-10-formyltetrahydrofolate + H(+). The protein operates within one-carbon metabolism; tetrahydrofolate interconversion. Catalyzes the oxidation of 5,10-methylenetetrahydrofolate to 5,10-methenyltetrahydrofolate and then the hydrolysis of 5,10-methenyltetrahydrofolate to 10-formyltetrahydrofolate. This chain is Bifunctional protein FolD, found in Erythrobacter litoralis (strain HTCC2594).